The primary structure comprises 429 residues: Glutamate-1-semialdehyde 2,1-aminomutase (429 aa).

The residue at position 265 (Lys-265) is an N6-(pyridoxal phosphate)lysine.

This sequence belongs to the class-III pyridoxal-phosphate-dependent aminotransferase family. HemL subfamily. Homodimer. It depends on pyridoxal 5'-phosphate as a cofactor.

It localises to the cytoplasm. The catalysed reaction is (S)-4-amino-5-oxopentanoate = 5-aminolevulinate. It participates in porphyrin-containing compound metabolism; protoporphyrin-IX biosynthesis; 5-aminolevulinate from L-glutamyl-tRNA(Glu): step 2/2. In Azotobacter vinelandii (strain DJ / ATCC BAA-1303), this protein is Glutamate-1-semialdehyde 2,1-aminomutase.